The primary structure comprises 44 residues: Cytochrome b559 subunit beta (44 aa).

The helical transmembrane segment at 19–35 (WVSIHALAVPTIFFLGS) threads the bilayer. His-23 serves as a coordination point for heme.

The protein belongs to the PsbE/PsbF family. As to quaternary structure, heterodimer of an alpha subunit and a beta subunit. PSII is composed of 1 copy each of membrane proteins PsbA, PsbB, PsbC, PsbD, PsbE, PsbF, PsbH, PsbI, PsbJ, PsbK, PsbL, PsbM, PsbT, PsbX, PsbY, PsbZ, Psb30/Ycf12, at least 3 peripheral proteins of the oxygen-evolving complex and a large number of cofactors. It forms dimeric complexes. Requires heme b as cofactor.

The protein resides in the plastid. Its subcellular location is the chloroplast thylakoid membrane. In terms of biological role, this b-type cytochrome is tightly associated with the reaction center of photosystem II (PSII). PSII is a light-driven water:plastoquinone oxidoreductase that uses light energy to abstract electrons from H(2)O, generating O(2) and a proton gradient subsequently used for ATP formation. It consists of a core antenna complex that captures photons, and an electron transfer chain that converts photonic excitation into a charge separation. The chain is Cytochrome b559 subunit beta from Chlamydomonas moewusii (Chlamydomonas eugametos).